The chain runs to 148 residues: Major microfilarial sheath protein (148 aa).

An N-terminal signal peptide occupies residues 1-18 (MCCKAILSFCILSSLGNA). The propeptide at 19–43 (LYFGSHRPQYLREVGQRQYPFEPQA) is removed in mature form. Repeats lie at residues 46–50 (MLPVP), 54–58 (MGPQP), 59–63 (MGPQP), 64–68 (MEPQP), and 71–75 (MGPQS). The segment at 46-75 (MLPVPQQPMGPQPMGPQPMEPQPLPMGPQS) is repeat-rich region. Residues 52-73 (QPMGPQPMGPQPMEPQPLPMGP) are compositionally biased toward pro residues. The tract at residues 52–80 (QPMGPQPMGPQPMEPQPLPMGPQSPQMQV) is disordered.

It to B.pahangi filarial sheath protein. O-glycosylated.

This chain is Major microfilarial sheath protein (GP22), found in Litomosoides carinii.